Consider the following 424-residue polypeptide: Tubulin-specific chaperone cofactor E-like protein (424 aa).

Phosphoserine occurs at positions 18 and 41. LRR repeat units follow at residues 73–98 (CAHV…IVSN), 99–123 (VPQL…TCAG), 124–147 (SFSG…HMIL), 150–172 (LPDL…PSIC), 173–197 (CHSL…KLGV), 199–224 (FPSL…SLAR), and 226–250 (FPNL…KLNS). The 42-residue stretch at 262 to 303 (IPLLQPYTTEERRKLVIARLPSVSKLNGSVVTDGEREDSERF) folds into the LRRCT domain. In terms of domain architecture, Ubiquitin-like spans 334 to 424 (AEVDLRPQSS…DKIYVESKTK (91 aa)). Residues 349–375 (HFNDQVEEMSIRLDQTVAELKKQLKTL) adopt a coiled-coil conformation.

In terms of tissue distribution, abundantly expressed in testis, but is also present in several tissues at a much lower level.

The protein localises to the cytoplasm. It is found in the cytoskeleton. Functionally, acts as a regulator of tubulin stability. The chain is Tubulin-specific chaperone cofactor E-like protein (TBCEL) from Homo sapiens (Human).